Reading from the N-terminus, the 851-residue chain is Receptor like protein kinase S.2 (851 aa).

One can recognise a Protein kinase 1 domain in the interval 117-436 (FSDELILGSG…LPSFKSHPLY (320 aa)). ATP is bound by residues 123–131 (LGSGGFGRV) and Lys146. Asp248 serves as the catalytic Proton acceptor. The tract at residues 448 to 471 (SATTTTTRTTMTTTTSTTSFNASS) is disordered. A Protein kinase 2 domain is found at 532–819 (FSDARRVAEV…SILDGSERFF (288 aa)). ATP contacts are provided by residues 538 to 546 (VAEVDFGTA) and Lys560.

This sequence belongs to the protein kinase superfamily. Ser/Thr protein kinase family.

It catalyses the reaction L-seryl-[protein] + ATP = O-phospho-L-seryl-[protein] + ADP + H(+). It carries out the reaction L-threonyl-[protein] + ATP = O-phospho-L-threonyl-[protein] + ADP + H(+). This Arabidopsis thaliana (Mouse-ear cress) protein is Receptor like protein kinase S.2 (LECRKS2).